Reading from the N-terminus, the 117-residue chain is Large ribosomal subunit protein uL18 (117 aa).

This sequence belongs to the universal ribosomal protein uL18 family. In terms of assembly, part of the 50S ribosomal subunit; part of the 5S rRNA/L5/L18/L25 subcomplex. Contacts the 5S and 23S rRNAs.

In terms of biological role, this is one of the proteins that bind and probably mediate the attachment of the 5S RNA into the large ribosomal subunit, where it forms part of the central protuberance. This chain is Large ribosomal subunit protein uL18, found in Photorhabdus laumondii subsp. laumondii (strain DSM 15139 / CIP 105565 / TT01) (Photorhabdus luminescens subsp. laumondii).